Reading from the N-terminus, the 332-residue chain is Glycerol-3-phosphate dehydrogenase [NAD(P)+] (332 aa).

NADPH is bound by residues Trp-13, Arg-33, and Lys-107. Residues Lys-107, Gly-136, and Ser-138 each contribute to the sn-glycerol 3-phosphate site. Ala-140 lines the NADPH pocket. Residues Lys-191, Asp-244, Ser-254, Arg-255, and Asn-256 each coordinate sn-glycerol 3-phosphate. The active-site Proton acceptor is the Lys-191. Position 255 (Arg-255) interacts with NADPH. NADPH is bound at residue Glu-280.

Belongs to the NAD-dependent glycerol-3-phosphate dehydrogenase family.

It is found in the cytoplasm. It catalyses the reaction sn-glycerol 3-phosphate + NAD(+) = dihydroxyacetone phosphate + NADH + H(+). The enzyme catalyses sn-glycerol 3-phosphate + NADP(+) = dihydroxyacetone phosphate + NADPH + H(+). Its pathway is membrane lipid metabolism; glycerophospholipid metabolism. Functionally, catalyzes the reduction of the glycolytic intermediate dihydroxyacetone phosphate (DHAP) to sn-glycerol 3-phosphate (G3P), the key precursor for phospholipid synthesis. The sequence is that of Glycerol-3-phosphate dehydrogenase [NAD(P)+] from Alkalilimnicola ehrlichii (strain ATCC BAA-1101 / DSM 17681 / MLHE-1).